Here is a 140-residue protein sequence, read N- to C-terminus: Large ribosomal subunit protein mL43 (140 aa).

It belongs to the mitochondrion-specific ribosomal protein mL43 family. Component of the mitochondrial large ribosomal subunit (mt-LSU). Mature yeast 74S mitochondrial ribosomes consist of a small (37S) and a large (54S) subunit. The 37S small subunit contains a 15S ribosomal RNA (15S mt-rRNA) and 34 different proteins. The 54S large subunit contains a 21S rRNA (21S mt-rRNA) and 46 different proteins.

It is found in the mitochondrion. Component of the mitochondrial ribosome (mitoribosome), a dedicated translation machinery responsible for the synthesis of mitochondrial genome-encoded proteins, including at least some of the essential transmembrane subunits of the mitochondrial respiratory chain. The mitoribosomes are attached to the mitochondrial inner membrane and translation products are cotranslationally integrated into the membrane. Also has an extraribosomal function, being essential for mitochondrial genome integrity. May interact with MHR1 to take part in the mtDNA repair mechanism. The polypeptide is Large ribosomal subunit protein mL43 (MRPL51) (Saccharomyces cerevisiae (strain ATCC 204508 / S288c) (Baker's yeast)).